A 683-amino-acid polypeptide reads, in one-letter code: Methionine--tRNA ligase (683 aa).

The 'HIGH' region motif lies at 15-25; that stretch reads PYANGPIHLGH. The Zn(2+) site is built by C146, C149, C159, and C162. Positions 332–336 match the 'KMSKS' region motif; the sequence is KMSKS. K335 is an ATP binding site. Residues 581–683 enclose the tRNA-binding domain; the sequence is DFFKVDLRVA…AGAKAGQRVK (103 aa).

The protein belongs to the class-I aminoacyl-tRNA synthetase family. MetG type 1 subfamily. Homodimer. The cofactor is Zn(2+).

It localises to the cytoplasm. The catalysed reaction is tRNA(Met) + L-methionine + ATP = L-methionyl-tRNA(Met) + AMP + diphosphate. Its function is as follows. Is required not only for elongation of protein synthesis but also for the initiation of all mRNA translation through initiator tRNA(fMet) aminoacylation. The protein is Methionine--tRNA ligase of Histophilus somni (strain 129Pt) (Haemophilus somnus).